The primary structure comprises 216 residues: Sperm microtubule inner protein 8 (216 aa).

In terms of assembly, microtubule inner protein component of sperm flagellar doublet microtubules. In terms of tissue distribution, expressed in sperm.

The protein resides in the cytoplasm. It is found in the cytoskeleton. The protein localises to the flagellum axoneme. In terms of biological role, microtubule inner protein (MIP) part of the dynein-decorated doublet microtubules (DMTs) in flagellum axoneme. May serve to reinforce and thus stabilize the microtubule structure in the sperm flagella. This chain is Sperm microtubule inner protein 8 (SPMIP8), found in Bos taurus (Bovine).